The primary structure comprises 455 residues: tRNA modification GTPase MnmE (455 aa).

Residues Arg26, Glu86, and Arg125 each contribute to the (6S)-5-formyl-5,6,7,8-tetrahydrofolate site. The region spanning 222–376 (GLKTAIIGRP…VEEKINQIFF (155 aa)) is the TrmE-type G domain. Asn232 is a K(+) binding site. Residues 232–237 (NVGKSS), 251–257 (TDIAGTT), and 276–279 (DTAG) each bind GTP. Ser236 provides a ligand contact to Mg(2+). Residues Thr251, Ile253, and Thr256 each coordinate K(+). Thr257 provides a ligand contact to Mg(2+). Residue Lys455 coordinates (6S)-5-formyl-5,6,7,8-tetrahydrofolate.

This sequence belongs to the TRAFAC class TrmE-Era-EngA-EngB-Septin-like GTPase superfamily. TrmE GTPase family. Homodimer. Heterotetramer of two MnmE and two MnmG subunits. Requires K(+) as cofactor.

The protein resides in the cytoplasm. Its function is as follows. Exhibits a very high intrinsic GTPase hydrolysis rate. Involved in the addition of a carboxymethylaminomethyl (cmnm) group at the wobble position (U34) of certain tRNAs, forming tRNA-cmnm(5)s(2)U34. The chain is tRNA modification GTPase MnmE from Lactococcus lactis subsp. cremoris (strain MG1363).